Reading from the N-terminus, the 326-residue chain is Biotin synthase (326 aa).

One can recognise a Radical SAM core domain in the interval 40–264 (GQVQACTLVS…VLPRSYVRLA (225 aa)). [4Fe-4S] cluster contacts are provided by Cys-55, Cys-59, and Cys-62. [2Fe-2S] cluster-binding residues include Cys-99, Cys-130, Cys-190, and Arg-262.

Belongs to the radical SAM superfamily. Biotin synthase family. In terms of assembly, homodimer. Requires [4Fe-4S] cluster as cofactor. It depends on [2Fe-2S] cluster as a cofactor.

It carries out the reaction (4R,5S)-dethiobiotin + (sulfur carrier)-SH + 2 reduced [2Fe-2S]-[ferredoxin] + 2 S-adenosyl-L-methionine = (sulfur carrier)-H + biotin + 2 5'-deoxyadenosine + 2 L-methionine + 2 oxidized [2Fe-2S]-[ferredoxin]. Its pathway is cofactor biosynthesis; biotin biosynthesis; biotin from 7,8-diaminononanoate: step 2/2. Functionally, catalyzes the conversion of dethiobiotin (DTB) to biotin by the insertion of a sulfur atom into dethiobiotin via a radical-based mechanism. This is Biotin synthase from Halorhodospira halophila (strain DSM 244 / SL1) (Ectothiorhodospira halophila (strain DSM 244 / SL1)).